Here is a 391-residue protein sequence, read N- to C-terminus: Probable FAD-dependent oxidoreductase PA4991 (391 aa).

Residues Ala17, Glu36, 44-45 (QS), 49-51 (QGI), and 346-347 (LA) each bind FAD.

The protein belongs to the DAO family. Monomer. FAD is required as a cofactor.

Its function is as follows. Probably functions as a FAD-dependent oxidoreductase, whose physiological substrate is unknown. Does not display amino-acid oxidase or glycerol-3-phosphate dehydrogenase activities. Is essential for growth of P.aeruginosa in the sputum of cystic fibrosis patients. This is Probable FAD-dependent oxidoreductase PA4991 from Pseudomonas aeruginosa (strain ATCC 15692 / DSM 22644 / CIP 104116 / JCM 14847 / LMG 12228 / 1C / PRS 101 / PAO1).